Reading from the N-terminus, the 218-residue chain is Small ribosomal subunit protein uS3c (218 aa).

The KH type-2 domain occupies 47–118 (VQKNIRISSG…KLNIAITRIS (72 aa)).

The protein belongs to the universal ribosomal protein uS3 family. In terms of assembly, part of the 30S ribosomal subunit.

Its subcellular location is the plastid. The protein resides in the chloroplast. This Crucihimalaya wallichii (Rock-cress) protein is Small ribosomal subunit protein uS3c (rps3).